Here is a 276-residue protein sequence, read N- to C-terminus: tRNA dimethylallyltransferase (276 aa).

An interaction with substrate tRNA region spans residues 9–12 (DSLS).

The protein belongs to the IPP transferase family. As to quaternary structure, monomer. The cofactor is Mg(2+).

The catalysed reaction is adenosine(37) in tRNA + dimethylallyl diphosphate = N(6)-dimethylallyladenosine(37) in tRNA + diphosphate. Catalyzes the transfer of a dimethylallyl group onto the adenine at position 37 in tRNAs that read codons beginning with uridine, leading to the formation of N6-(dimethylallyl)adenosine (i(6)A). This Helicobacter pylori (strain HPAG1) protein is tRNA dimethylallyltransferase (miaA).